The primary structure comprises 556 residues: Adenine deaminase (556 aa).

The protein belongs to the metallo-dependent hydrolases superfamily. Adenine deaminase family. It depends on Mn(2+) as a cofactor.

It carries out the reaction adenine + H2O + H(+) = hypoxanthine + NH4(+). The chain is Adenine deaminase from Methanocaldococcus jannaschii (strain ATCC 43067 / DSM 2661 / JAL-1 / JCM 10045 / NBRC 100440) (Methanococcus jannaschii).